The following is a 175-amino-acid chain: Peptidyl-prolyl cis-trans isomerase B (175 aa).

Residues 3–172 (EQLYATLKTN…EDVVIESVVV (170 aa)) enclose the PPIase cyclophilin-type domain.

The protein belongs to the cyclophilin-type PPIase family.

Its subcellular location is the cytoplasm. It carries out the reaction [protein]-peptidylproline (omega=180) = [protein]-peptidylproline (omega=0). With respect to regulation, inhibited by cyclosporin A (CsA). In terms of biological role, PPIases accelerate the folding of proteins. It catalyzes the cis-trans isomerization of proline imidic peptide bonds in oligopeptides. The chain is Peptidyl-prolyl cis-trans isomerase B (cypB) from Streptomyces anulatus (Streptomyces chrysomallus).